The chain runs to 283 residues: Diaminopimelate epimerase (283 aa).

Asn14, Gln47, and Asn67 together coordinate substrate. Cys76 acts as the Proton donor in catalysis. Substrate contacts are provided by residues 77-78, Asn164, Asn197, and 215-216; these read GN and ER. The active-site Proton acceptor is the Cys224. 225 to 226 provides a ligand contact to substrate; sequence GT.

Belongs to the diaminopimelate epimerase family. As to quaternary structure, homodimer.

It localises to the cytoplasm. The catalysed reaction is (2S,6S)-2,6-diaminopimelate = meso-2,6-diaminopimelate. Its pathway is amino-acid biosynthesis; L-lysine biosynthesis via DAP pathway; DL-2,6-diaminopimelate from LL-2,6-diaminopimelate: step 1/1. In terms of biological role, catalyzes the stereoinversion of LL-2,6-diaminopimelate (L,L-DAP) to meso-diaminopimelate (meso-DAP), a precursor of L-lysine and an essential component of the bacterial peptidoglycan. The sequence is that of Diaminopimelate epimerase from Neisseria meningitidis serogroup A / serotype 4A (strain DSM 15465 / Z2491).